The sequence spans 780 residues: Cullin-5 (780 aa).

Ser-34 bears the Phosphoserine mark. Position 210 is a phosphothreonine (Thr-210). Positions 711–772 constitute a Cullin neddylation domain; it reads RILRTQEAII…HKYIRRDEAD (62 aa). Lys-724 is covalently cross-linked (Glycyl lysine isopeptide (Lys-Gly) (interchain with G-Cter in NEDD8)).

The protein belongs to the cullin family. In terms of assembly, component of multiple cullin-5-RING E3 ubiquitin-protein ligase complexes (ECS complexes, also named CRL5 complexes) formed of CUL5, Elongin BC (ELOB and ELOC), RNF7/RBX2 and a variable SOCS box domain-containing protein as substrate-specific recognition component. CUL5-containing ECS complexes specifically contain RNF7/RBX2, and not RBX1, as catalytic subunit. Component of the ECS(ASB2) complex with the substrate recognition component ASB2. Component of the ECS(ASB6) complex with the substrate recognition component ASB6. Component of the ECS(ASB7) complex with the substrate recognition component ASB7. Component of the ECS(ASB9) complex with the substrate recognition component ASB9. Component of the ECS(ASB11) complex with the substrate recognition component ASB11. Component of the ECS(ASB12) complex with the substrate recognition component ASB12. Component of the ECS(LRRC41) complex with the substrate recognition component LRRC41. Component of the ECS(SOCS1) complex with the substrate recognition component SOCS1. Component of the ECS(SOCS2) complex with the substrate recognition component SOCS2. Component of the ECS(WSB1) complex with the substrate recognition subunit WSB1. Component of the ECS(SOCS3) complex with the substrate recognition component SOCS3. Component of the ECS(SOCS7) complex with the substrate recognition component SOCS7. Component of the ECS(SPSB1) complex with the substrate recognition component SPSB1. Component of the ECS(SPSB3) complex with the substrate recognition component SPSB3. Component of the ECS(SPSB2) complex with the substrate recognition component SPSB2. Component of the ECS(SPSB4) complex with the substrate recognition component SPSB4. Component of the ECS(RAB40) complex with the substrate recognition subunit RAB40A, RAB40B or RAB40C. Component of the ECS(KLHDC1) complex with the substrate recognition component KLHDC1. Component of the ECS(PCMTD1) complex with the substrate recognition subunit PCMTD1. May also form complexes containing RBX1 and ELOA or VHL; additional evidence is however required to confirm this result in vivo. Interacts (when neddylated) with ARIH2; leading to activate the E3 ligase activity of ARIH2. Interacts with ERCC6; the interaction is induced by DNA damaging agents or inhibitors of RNA polymerase II elongation. Interacts with ELOA (via the BC-box). Interacts (unneddylated form) with DCUN1D1, DCUN1D2, DCUN1D3, DCUN1D4 and DCUN1D5; these interactions promote the cullin neddylation. In terms of processing, neddylated; which enhances the ubiquitination activity of ECS complexes and prevents binding of the inhibitor CAND1. Deneddylated via its interaction with the COP9 signalosome (CSN).

It localises to the nucleus. It functions in the pathway protein modification; protein ubiquitination. Core component of multiple cullin-5-RING E3 ubiquitin-protein ligase complexes (ECS complexes, also named CRL5 complexes), which mediate the ubiquitination and subsequent proteasomal degradation of target proteins. Acts a scaffold protein that contributes to catalysis through positioning of the substrate and the ubiquitin-conjugating enzyme. The functional specificity of the E3 ubiquitin-protein ligase complex depends on the variable SOCS box-containing substrate recognition component. Acts as a key regulator of neuron positioning during cortex development: component of various SOCS-containing ECS complexes, such as the ECS(SOCS7) complex, that regulate reelin signaling by mediating ubiquitination and degradation of DAB1. ECS(SOCS1) seems to direct ubiquitination of JAK2. The ECS(SOCS2) complex mediates the ubiquitination and subsequent proteasomal degradation of phosphorylated EPOR and GHR. The ECS(SPSB3) complex catalyzes ubiquitination of nuclear CGAS. ECS(KLHDC1) complex is part of the DesCEND (destruction via C-end degrons) pathway and mediates ubiquitination and degradation of truncated SELENOS selenoprotein produced by failed UGA/Sec decoding, which ends with a glycine. The ECS(ASB9) complex mediates ubiquitination and degradation of CKB. As part of some ECS complex, promotes 'Lys-11'-linked ubiquitination and degradation of BTRC. As part of a multisubunit ECS complex, polyubiquitinates monoubiquitinated POLR2A. As part of the ECS(RAB40C) complex, mediates ANKRD28 ubiquitination and degradation, thereby regulating protein phosphatase 6 (PP6) complex activity and focal adhesion assembly during cell migration. As part of the ECS(RAB40A) complex, mediates RHOU 'Lys-48'-linked ubiquitination and degradation, thus inhibiting focal adhesion disassembly during cell migration. As part of the ECS(RAB40B) complex, mediates LIMA1/EPLIN and RAP2 ubiquitination, thereby regulating actin cytoskeleton dynamics and stress fiber formation during cell migration. May form a cell surface vasopressin receptor. The protein is Cullin-5 of Rattus norvegicus (Rat).